A 195-amino-acid chain; its full sequence is Thioredoxin reductase-like selenoprotein T (195 aa).

The signal sequence occupies residues 1–19; it reads MRLLLLLLVAASAVVRSEA. The segment at residues 46-49 is a cross-link (cysteinyl-selenocysteine (Cys-Sec)); the sequence is CVSU. A non-standard amino acid (selenocysteine) is located at residue selenocysteine 49. A helical membrane pass occupies residues 85–103; the sequence is IASFLSVFKLVLIGLIIVG.

Belongs to the SelWTH family. Selenoprotein T subfamily. In terms of processing, may contain a selenide-sulfide bond between Cys-46 and Sec-49. This bond is speculated to serve as redox-active pair. In terms of tissue distribution, ubiquitous. Highly expressed in the endocrine pancreas. Expressed at low levels in the adult brain.

The protein localises to the endoplasmic reticulum membrane. It catalyses the reaction [thioredoxin]-dithiol + NADP(+) = [thioredoxin]-disulfide + NADPH + H(+). Selenoprotein with thioredoxin reductase-like oxidoreductase activity. Protects dopaminergic neurons against oxidative stress and cell death. Involved in ADCYAP1/PACAP-induced calcium mobilization and neuroendocrine secretion. Plays a role in fibroblast anchorage and redox regulation. In gastric smooth muscle, modulates the contraction processes through the regulation of calcium release and MYLK activation. In pancreatic islets, involved in the control of glucose homeostasis, contributes to prolonged ADCYAP1/PACAP-induced insulin secretion. In Mus musculus (Mouse), this protein is Thioredoxin reductase-like selenoprotein T.